Reading from the N-terminus, the 489-residue chain is Lysine--tRNA ligase (489 aa).

Positions 399 and 406 each coordinate Mg(2+).

The protein belongs to the class-II aminoacyl-tRNA synthetase family. In terms of assembly, homodimer. The cofactor is Mg(2+).

Its subcellular location is the cytoplasm. It catalyses the reaction tRNA(Lys) + L-lysine + ATP = L-lysyl-tRNA(Lys) + AMP + diphosphate. The polypeptide is Lysine--tRNA ligase (Malacoplasma penetrans (strain HF-2) (Mycoplasma penetrans)).